The chain runs to 385 residues: Sensor histidine kinase Hik2 (385 aa).

One can recognise a GAF domain in the interval 11 to 131 (ALCRTQLELV…QQVAQTLAIA (121 aa)). C13 is a [3Fe-4S] cluster binding site. Residues 142–270 (SHSPAQPLDQ…PQLPPIWLEE (129 aa)) form a DHp domain, may sense NaCl region. A Histidine kinase domain is found at 158–381 (DLLHQLRNPV…AFTLAIPWQM (224 aa)). At H161 the chain carries Phosphohistidine; by autocatalysis.

This sequence belongs to the chloroplast sensor kinase protein family. In terms of assembly, hexamers; upon treatment with 0.5 M NaCl only tetramers are seen. The tetramers are probably inactive. [3Fe-4S] cluster serves as cofactor. In terms of processing, autophosphorylates, possibly on His-161.

The enzyme catalyses ATP + protein L-histidine = ADP + protein N-phospho-L-histidine.. Functionally, member of 2 two-component regulatory system(s) Hik2/Rre1 and Hik2/RppA. Transduces PQ (plastoquinone) redox signals to photosystem gene expression machinery during the adjustment of photosystem stoichiometry. Reduced PQ suppresses its autophosphorylation activity (i.e. kinase activity is higher under oxidizing conditions). As part of a two-component regulatory system with Rre1, controls expression of sigB and several other genes in response to hyperosmotic stress. May transfer phosphate to RppA in a possible Hik2/RppA two-component system. The chain is Sensor histidine kinase Hik2 from Thermosynechococcus vestitus (strain NIES-2133 / IAM M-273 / BP-1).